A 360-amino-acid polypeptide reads, in one-letter code: MKNIFLHSLSLENYRNFKNLELKTDNTPIILIGENGSGKTNILEAISLFYPGRGLRSAKLANVCKTSEDHCLVKALLQSKLGLAEFTTQFKRSSNRRITEYNESKIANNELSKFTSMVWLTPHMEGIFTSGSNDRRKFLDRIVYNFDPKHAELVSKYEYYMHERNKILVEDIRDDNWLKIIEEKMADISNHIANNRLKTLEFMQQAIDDLENEFPKADLSIDGIVEQKILNGKENIVSFITAELYQTRSKDKLLGRTSFGVHKSDFLVKHQKKNILAKFCSTGEQKAILIAIILAEMNYAIKLTKIAPILLLDEVFVHLDDKRRQYLIEFLTGLNMQLWVTTTNLEGIENFANKAQLIKL.

Residue 33-40 (GENGSGKT) participates in ATP binding.

This sequence belongs to the RecF family.

It localises to the cytoplasm. Its function is as follows. The RecF protein is involved in DNA metabolism; it is required for DNA replication and normal SOS inducibility. RecF binds preferentially to single-stranded, linear DNA. It also seems to bind ATP. This is DNA replication and repair protein RecF from Rickettsia rickettsii (strain Iowa).